Here is a 1003-residue protein sequence, read N- to C-terminus: Phosphatidylinositol 4,5-bisphosphate 5-phosphatase A (1003 aa).

Disordered regions lie at residues 1 to 110 (MEGQ…AAKS) and 147 to 414 (AMPR…QPTC). The short motif at 6–11 (RSGSAR) is the RSXSXX motif 1 element. The span at 11-24 (RPGTRTGLGPLPGT) shows a compositional bias: low complexity. Position 56 is an asymmetric dimethylarginine; alternate (Arg-56). At Arg-56 the chain carries Omega-N-methylarginine; alternate. Residue Arg-65 is modified to Omega-N-methylarginine. Asymmetric dimethylarginine is present on Arg-76. Residue Arg-83 is modified to Asymmetric dimethylarginine; alternate. Position 83 is an omega-N-methylarginine; alternate (Arg-83). Residues 160–174 (LTPTSRDQKQLSPTS) show a composition bias toward polar residues. Position 171 is a phosphoserine (Ser-171). Over residues 180-196 (ALATSGLSLALASQEQP) the composition is skewed to low complexity. The span at 197-210 (PQSPSSPSPVPSPV) shows a compositional bias: pro residues. The segment covering 284-294 (ARPEAPRHSPE) has biased composition (basic and acidic residues). Residues Ser-292 and Ser-325 each carry the phosphoserine modification. The segment covering 338 to 348 (VPPPLPKPPRS) has biased composition (pro residues). Residues 346–351 (PRSPSR) carry the SH3-binding motif. Low complexity-rich tracts occupy residues 349–361 (PSRS…NRSP) and 390–413 (QAQE…AQPT). An RSXSXX motif 2 motif is present at residues 351 to 356 (RSPSRS). The segment at 422-725 (ITVVTWNVGT…SDHKPVAAQF (304 aa)) is catalytic. Positions 726 to 837 (ILQFAFRDDV…IGVTEPFQIS (112 aa)) are required for ruffle localization. A disordered region spans residues 839–1003 (PTSESASSST…LGLEEGGLGP (165 aa)). Low complexity predominate over residues 840-855 (TSESASSSTDSSGTSS). 2 consecutive short sequence motifs (RSXSXX motif) follow at residues 871-876 (RSPSPG) and 882-887 (RSRSPG). Ser-900 is subject to Phosphoserine. Composition is skewed to low complexity over residues 907 to 919 (SRSP…QLPR) and 927 to 943 (SSSS…GLPG). Positions 908-913 (RSPSPQ) match the RSXSXX motif 5 motif. A Phosphoserine modification is found at Ser-987.

This sequence belongs to the inositol 1,4,5-trisphosphate 5-phosphatase type II family.

Its subcellular location is the cytoplasm. It carries out the reaction 1D-myo-inositol 1,4,5-trisphosphate + H2O = 1D-myo-inositol 1,4-bisphosphate + phosphate. The enzyme catalyses 1D-myo-inositol 1,3,4,5-tetrakisphosphate + H2O = 1D-myo-inositol 1,3,4-trisphosphate + phosphate. The catalysed reaction is a 1,2-diacyl-sn-glycero-3-phospho-(1D-myo-inositol-4,5-bisphosphate) + H2O = a 1,2-diacyl-sn-glycero-3-phospho-(1D-myo-inositol 4-phosphate) + phosphate. Functionally, inositol 5-phosphatase, which converts inositol 1,4,5-trisphosphate to inositol 1,4-bisphosphate. Also converts phosphatidylinositol 4,5-bisphosphate to phosphatidylinositol 4-phosphate and inositol 1,3,4,5-tetrakisphosphate to inositol 1,3,4-trisphosphate in vitro. May be involved in modulation of the function of inositol and phosphatidylinositol polyphosphate-binding proteins that are present at membranes ruffles. This Mus musculus (Mouse) protein is Phosphatidylinositol 4,5-bisphosphate 5-phosphatase A (Inpp5j).